The chain runs to 443 residues: ATP-dependent protease ATPase subunit HslU (443 aa).

Residues Ile18, 60–65 (GVGKTE), Asp256, Glu321, and Arg393 each bind ATP.

It belongs to the ClpX chaperone family. HslU subfamily. As to quaternary structure, a double ring-shaped homohexamer of HslV is capped on each side by a ring-shaped HslU homohexamer. The assembly of the HslU/HslV complex is dependent on binding of ATP.

The protein resides in the cytoplasm. Functionally, ATPase subunit of a proteasome-like degradation complex; this subunit has chaperone activity. The binding of ATP and its subsequent hydrolysis by HslU are essential for unfolding of protein substrates subsequently hydrolyzed by HslV. HslU recognizes the N-terminal part of its protein substrates and unfolds these before they are guided to HslV for hydrolysis. This is ATP-dependent protease ATPase subunit HslU from Vibrio cholerae serotype O1 (strain ATCC 39315 / El Tor Inaba N16961).